A 498-amino-acid polypeptide reads, in one-letter code: Swainsonine transporter swnT (498 aa).

Over residues 1–10 (MSLRNDEQTE) the composition is skewed to basic and acidic residues. The segment at 1–21 (MSLRNDEQTEKGAVVGKVDSQ) is disordered. The next 5 helical transmembrane spans lie at 42 to 64 (LSAIGIGYGVTNTAVGLLLVLGT), 79 to 99 (LAMAAVGLATATTLSELISAI), 126 to 146 (AMISWIAAIAIGASGNLAVPV), 167 to 187 (FVVFQLINIVTCFGACFEYFL), and 193 to 213 (ALLLVNVLSVSAIIITLFATA). N-linked (GlcNAc...) asparagine glycosylation is found at N227 and N242. 6 helical membrane passes run 272–292 (LIWTIVIAFSSGLLMILAVLV), 316–336 (AAAIGLWVPVLFLVFASVWSI), 370–390 (PIWSLIGSAIGTALFGCLYLA), 398–418 (LIATGILLQYASYSIPTILVL), 436–456 (GFMANIVMLAWTLVALIFYCF), and 469–489 (YVSAVLILIAILITSLWFLYA).

The protein belongs to the amino acid-polyamine-organocation (APC) superfamily. Amino acid/choline transporter (ACT) (TC 2.A.3.4) family.

The protein localises to the membrane. Transmembrane transporter; part of the gene cluster that mediates the biosynthesis of swainsonine, a cytotoxic fungal alkaloid and a potential cancer therapy drug. Does not mediate the secretion of SW and the exact role of swnT in SW biosynthesis remains to be determined. The chain is Swainsonine transporter swnT from Arthroderma benhamiae (strain ATCC MYA-4681 / CBS 112371) (Trichophyton mentagrophytes).